The following is a 128-amino-acid chain: uncharacterized protein (128 aa).

2 helical membrane-spanning segments follow: residues Leu-52–Leu-72 and Leu-91–Ile-111.

The protein localises to the cell membrane. This is an uncharacterized protein from Mycoplasma pneumoniae (strain ATCC 29342 / M129 / Subtype 1) (Mycoplasmoides pneumoniae).